Reading from the N-terminus, the 199-residue chain is Peroxiredoxin-1 (199 aa).

The residue at position 2 (S2) is an N-acetylserine. A Thioredoxin domain is found at A6 to F165. K7 carries the post-translational modification N6-acetyllysine; alternate. Residue K7 forms a Glycyl lysine isopeptide (Lys-Gly) (interchain with G-Cter in SUMO2); alternate linkage. An N6-acetyllysine mark is found at K16 and K27. S32 carries the phosphoserine modification. K35 bears the N6-acetyllysine; alternate mark. Position 35 is an N6-succinyllysine; alternate (K35). The Cysteine sulfenic acid (-SOH) intermediate role is filled by C52. T90 bears the Phosphothreonine mark. K120 is covalently cross-linked (Glycyl lysine isopeptide (Lys-Gly) (interchain with G-Cter in SUMO2)). N6-acetyllysine is present on K136. The segment at G176–K199 is disordered. A compositionally biased stretch (basic and acidic residues) spans I184 to K199. K185 participates in a covalent cross-link: Glycyl lysine isopeptide (Lys-Gly) (interchain with G-Cter in SUMO1). K197 carries the post-translational modification N6-acetyllysine.

This sequence belongs to the peroxiredoxin family. AhpC/Prx1 subfamily. As to quaternary structure, homodimer; disulfide-linked, upon oxidation. 5 homodimers assemble to form a ring-like decamer. Interacts with GDPD5; forms a mixed-disulfide with GDPD5. Interacts with SESN1 and SESN2. Interacts with FAM107A. Post-translationally, phosphorylated on Thr-90 during the M-phase, which leads to a decrease in enzymatic activity. In terms of processing, acetylation increases reducing activity and resistance to superoxidation. Deacetylated by HDAC6 which decreases reducing activity. In terms of tissue distribution, detected in heart and skeletal muscle (at protein level).

The protein resides in the cytoplasm. The enzyme catalyses a hydroperoxide + [thioredoxin]-dithiol = an alcohol + [thioredoxin]-disulfide + H2O. In terms of biological role, thiol-specific peroxidase that catalyzes the reduction of hydrogen peroxide and organic hydroperoxides to water and alcohols, respectively. Plays a role in cell protection against oxidative stress by detoxifying peroxides and as sensor of hydrogen peroxide-mediated signaling events. Might participate in the signaling cascades of growth factors and tumor necrosis factor-alpha by regulating the intracellular concentrations of H(2)O(2). Reduces an intramolecular disulfide bond in GDPD5 that gates the ability to GDPD5 to drive postmitotic motor neuron differentiation. The chain is Peroxiredoxin-1 (PRDX1) from Myotis lucifugus (Little brown bat).